The following is a 101-amino-acid chain: Small ribosomal subunit protein bS18c (101 aa).

A compositionally biased stretch (basic residues) spans 1–19 (MNKSKRPFTKSKRSFRRRL). The interval 1 to 20 (MNKSKRPFTKSKRSFRRRLP) is disordered.

It belongs to the bacterial ribosomal protein bS18 family. Part of the 30S ribosomal subunit.

Its subcellular location is the plastid. The protein resides in the chloroplast. The sequence is that of Small ribosomal subunit protein bS18c from Arabis hirsuta (Hairy rock-cress).